The primary structure comprises 542 residues: Peptide chain release factor 3 (542 aa).

The 270-residue stretch at 14 to 283 folds into the tr-type G domain; the sequence is ERRRNFAIIS…AFLDYALKPA (270 aa). GTP-binding positions include 23 to 30, 91 to 95, and 145 to 148; these read SHPDAGKT, DTPGH, and NKLD.

The protein belongs to the TRAFAC class translation factor GTPase superfamily. Classic translation factor GTPase family. PrfC subfamily.

It is found in the cytoplasm. Its function is as follows. Increases the formation of ribosomal termination complexes and stimulates activities of RF-1 and RF-2. It binds guanine nucleotides and has strong preference for UGA stop codons. It may interact directly with the ribosome. The stimulation of RF-1 and RF-2 is significantly reduced by GTP and GDP, but not by GMP. The chain is Peptide chain release factor 3 from Cyanothece sp. (strain PCC 7425 / ATCC 29141).